The primary structure comprises 355 residues: Tryptophan--tRNA ligase (355 aa).

ATP-binding positions include Q13–T15 and G21–N22. The short motif at P14–N22 is the 'HIGH' region element. D137 lines the L-tryptophan pocket. ATP contacts are provided by residues G149 to D151, I208, and K217 to S221. The short motif at K217–S221 is the 'KMSKS' region element.

The protein belongs to the class-I aminoacyl-tRNA synthetase family. Homodimer.

Its subcellular location is the cytoplasm. It carries out the reaction tRNA(Trp) + L-tryptophan + ATP = L-tryptophyl-tRNA(Trp) + AMP + diphosphate + H(+). Catalyzes the attachment of tryptophan to tRNA(Trp). This chain is Tryptophan--tRNA ligase, found in Brucella melitensis biotype 1 (strain ATCC 23456 / CCUG 17765 / NCTC 10094 / 16M).